A 142-amino-acid chain; its full sequence is Large ribosomal subunit protein uL11 (142 aa).

The protein belongs to the universal ribosomal protein uL11 family. In terms of assembly, part of the ribosomal stalk of the 50S ribosomal subunit. Interacts with L10 and the large rRNA to form the base of the stalk. L10 forms an elongated spine to which L12 dimers bind in a sequential fashion forming a multimeric L10(L12)X complex. One or more lysine residues are methylated.

Its function is as follows. Forms part of the ribosomal stalk which helps the ribosome interact with GTP-bound translation factors. This chain is Large ribosomal subunit protein uL11, found in Sinorhizobium medicae (strain WSM419) (Ensifer medicae).